A 203-amino-acid chain; its full sequence is Translation initiation factor IF-3 (203 aa).

Positions 172–182 are enriched in basic and acidic residues; the sequence is EAPKNEKKTKE. A disordered region spans residues 172 to 203; the sequence is EAPKNEKKTKENNPPFNRINLMKGENHAKNED.

This sequence belongs to the IF-3 family. In terms of assembly, monomer.

It localises to the cytoplasm. IF-3 binds to the 30S ribosomal subunit and shifts the equilibrium between 70S ribosomes and their 50S and 30S subunits in favor of the free subunits, thus enhancing the availability of 30S subunits on which protein synthesis initiation begins. This is Translation initiation factor IF-3 from Helicobacter pylori (strain J99 / ATCC 700824) (Campylobacter pylori J99).